A 61-amino-acid polypeptide reads, in one-letter code: Early E3 6.4 kDa protein (61 aa).

Residues 1-25 (MGNAGPLKLHTITKPGTIPYPPHGS) form a disordered region.

This is Early E3 6.4 kDa protein from Homo sapiens (Human).